Consider the following 167-residue polypeptide: 3-isopropylmalate dehydratase small subunit (167 aa).

This sequence belongs to the LeuD family. LeuD type 2 subfamily. In terms of assembly, heterodimer of LeuC and LeuD.

The enzyme catalyses (2R,3S)-3-isopropylmalate = (2S)-2-isopropylmalate. Its pathway is amino-acid biosynthesis; L-leucine biosynthesis; L-leucine from 3-methyl-2-oxobutanoate: step 2/4. Functionally, catalyzes the isomerization between 2-isopropylmalate and 3-isopropylmalate, via the formation of 2-isopropylmaleate. This is 3-isopropylmalate dehydratase small subunit from Wolinella succinogenes (strain ATCC 29543 / DSM 1740 / CCUG 13145 / JCM 31913 / LMG 7466 / NCTC 11488 / FDC 602W) (Vibrio succinogenes).